The following is a 32-amino-acid chain: U6-ctenitoxin-Pr1a (32 aa).

Disulfide bonds link C3–C17, C10–C21, and C16–C30.

Expressed by the venom gland.

It is found in the secreted. The protein is U6-ctenitoxin-Pr1a of Phoneutria reidyi (Brazilian Amazonian armed spider).